The following is a 279-amino-acid chain: Putative pyruvate, phosphate dikinase regulatory protein (279 aa).

An ADP-binding site is contributed by 157 to 164 (GVSRTSKT).

Belongs to the pyruvate, phosphate/water dikinase regulatory protein family. PDRP subfamily.

The catalysed reaction is N(tele)-phospho-L-histidyl/L-threonyl-[pyruvate, phosphate dikinase] + ADP = N(tele)-phospho-L-histidyl/O-phospho-L-threonyl-[pyruvate, phosphate dikinase] + AMP + H(+). The enzyme catalyses N(tele)-phospho-L-histidyl/O-phospho-L-threonyl-[pyruvate, phosphate dikinase] + phosphate + H(+) = N(tele)-phospho-L-histidyl/L-threonyl-[pyruvate, phosphate dikinase] + diphosphate. Bifunctional serine/threonine kinase and phosphorylase involved in the regulation of the pyruvate, phosphate dikinase (PPDK) by catalyzing its phosphorylation/dephosphorylation. In Lactobacillus helveticus (strain DPC 4571), this protein is Putative pyruvate, phosphate dikinase regulatory protein.